We begin with the raw amino-acid sequence, 513 residues long: PPE family protein PPE4 (513 aa).

3 helical membrane-spanning segments follow: residues 233-253 (IIIA…PLLF), 277-297 (FLLP…PIVL), and 309-329 (LAAA…AVTG). 2 disordered regions span residues 395 to 446 (AAAA…ERGA) and 469 to 513 (LAGD…HDSK).

This sequence belongs to the mycobacterial PPE family.

The protein resides in the cell membrane. Important for the siderophore-mediated iron-acquisition function of ESX-3. The chain is PPE family protein PPE4 (PPE4) from Mycobacterium tuberculosis (strain CDC 1551 / Oshkosh).